The following is a 485-amino-acid chain: Predicted GPI-anchored protein 27 (485 aa).

Residues methionine 1–serine 20 form the signal peptide. 4 N-linked (GlcNAc...) asparagine glycosylation sites follow: asparagine 30, asparagine 86, asparagine 96, and asparagine 444. The GPI-anchor amidated glycine moiety is linked to residue glycine 467. Residues leucine 468–leucine 485 constitute a propeptide, removed in mature form.

It localises to the cell membrane. The polypeptide is Predicted GPI-anchored protein 27 (PGA27) (Candida albicans (strain SC5314 / ATCC MYA-2876) (Yeast)).